Reading from the N-terminus, the 466-residue chain is A-type ATP synthase subunit B 2 (466 aa).

Belongs to the ATPase alpha/beta chains family. As to quaternary structure, has multiple subunits with at least A(3), B(3), C, D, E, F, H, I and proteolipid K(x).

It localises to the cell membrane. Component of the A-type ATP synthase that produces ATP from ADP in the presence of a proton gradient across the membrane. The B chain is a regulatory subunit. The protein is A-type ATP synthase subunit B 2 of Methanospirillum hungatei JF-1 (strain ATCC 27890 / DSM 864 / NBRC 100397 / JF-1).